A 33-amino-acid chain; its full sequence is Cytochrome b6-f complex subunit 8 (33 aa).

A helical membrane pass occupies residues 2–22 (LFTIAWASLAAVFSFSIAMVV).

This sequence belongs to the PetN family. As to quaternary structure, the 4 large subunits of the cytochrome b6-f complex are cytochrome b6, subunit IV (17 kDa polypeptide, PetD), cytochrome f and the Rieske protein, while the 4 small subunits are PetG, PetL, PetM and PetN. The complex functions as a dimer.

It is found in the cellular thylakoid membrane. Functionally, component of the cytochrome b6-f complex, which mediates electron transfer between photosystem II (PSII) and photosystem I (PSI), cyclic electron flow around PSI, and state transitions. This Synechococcus sp. (strain CC9311) protein is Cytochrome b6-f complex subunit 8.